We begin with the raw amino-acid sequence, 431 residues long: Tyrosine--tRNA ligase (431 aa).

L-tyrosine is bound at residue tyrosine 33. The short motif at 38–47 is the 'HIGH' region element; it reads PTADSLHIGS. Positions 172 and 176 each coordinate L-tyrosine. The 'KMSKS' region signature appears at 234–238; it reads KFGKS. Lysine 237 is a binding site for ATP. Residues 364 to 431 form the S4 RNA-binding domain; that stretch reads INIVEVLNEK…KKNYFVLNVK (68 aa).

This sequence belongs to the class-I aminoacyl-tRNA synthetase family. TyrS type 1 subfamily. In terms of assembly, homodimer.

It is found in the cytoplasm. The enzyme catalyses tRNA(Tyr) + L-tyrosine + ATP = L-tyrosyl-tRNA(Tyr) + AMP + diphosphate + H(+). In terms of biological role, catalyzes the attachment of tyrosine to tRNA(Tyr) in a two-step reaction: tyrosine is first activated by ATP to form Tyr-AMP and then transferred to the acceptor end of tRNA(Tyr). The polypeptide is Tyrosine--tRNA ligase (Flavobacterium psychrophilum (strain ATCC 49511 / DSM 21280 / CIP 103535 / JIP02/86)).